The sequence spans 295 residues: Proline-rich protein 32 (295 aa).

Disordered regions lie at residues 10–48 (GHAP…GHPG) and 101–120 (ATGE…SGQD).

This Bos taurus (Bovine) protein is Proline-rich protein 32 (PRR32).